The sequence spans 394 residues: Carbamoyl phosphate synthase small chain (394 aa).

A CPSase region spans residues 1 to 188 (MIRKERAILA…ALPYAFPTLR (188 aa)). Residues serine 49, glycine 240, and glycine 242 each coordinate L-glutamine. Residues 192–379 (RVVLMDFGIK…IEEIDAFDGG (188 aa)) form the Glutamine amidotransferase type-1 domain. Cysteine 267 acts as the Nucleophile in catalysis. L-glutamine-binding residues include leucine 268, glutamine 271, asparagine 309, glycine 311, and tyrosine 312. Active-site residues include histidine 352 and glutamate 354.

It belongs to the CarA family. In terms of assembly, composed of two chains; the small (or glutamine) chain promotes the hydrolysis of glutamine to ammonia, which is used by the large (or ammonia) chain to synthesize carbamoyl phosphate. Tetramer of heterodimers (alpha,beta)4.

The enzyme catalyses hydrogencarbonate + L-glutamine + 2 ATP + H2O = carbamoyl phosphate + L-glutamate + 2 ADP + phosphate + 2 H(+). It catalyses the reaction L-glutamine + H2O = L-glutamate + NH4(+). It functions in the pathway amino-acid biosynthesis; L-arginine biosynthesis; carbamoyl phosphate from bicarbonate: step 1/1. It participates in pyrimidine metabolism; UMP biosynthesis via de novo pathway; (S)-dihydroorotate from bicarbonate: step 1/3. Small subunit of the glutamine-dependent carbamoyl phosphate synthetase (CPSase). CPSase catalyzes the formation of carbamoyl phosphate from the ammonia moiety of glutamine, carbonate, and phosphate donated by ATP, constituting the first step of 2 biosynthetic pathways, one leading to arginine and/or urea and the other to pyrimidine nucleotides. The small subunit (glutamine amidotransferase) binds and cleaves glutamine to supply the large subunit with the substrate ammonia. The protein is Carbamoyl phosphate synthase small chain of Deinococcus radiodurans (strain ATCC 13939 / DSM 20539 / JCM 16871 / CCUG 27074 / LMG 4051 / NBRC 15346 / NCIMB 9279 / VKM B-1422 / R1).